We begin with the raw amino-acid sequence, 287 residues long: Glucose import system permease protein GlcU (287 aa).

7 helical membrane-spanning segments follow: residues 14-34 (HYLA…AMLI), 76-96 (IIVI…AYFF), 113-133 (VLFS…LLPL), 149-169 (IIFA…SMFI), 194-214 (IVFP…IIQA), 218-238 (FFIP…IAVL), and 250-270 (DTFA…VFLG). Positions 71 to 269 (LINSLIIVIP…IIPLAIFVFL (199 aa)) constitute an ABC transmembrane type-1 domain.

The protein belongs to the binding-protein-dependent transport system permease family. The complex is composed of two ATP-binding proteins (GlcV), two transmembrane proteins (GlcT and GlcU) and a solute-binding protein (GlcS).

The protein localises to the cell membrane. Functionally, part of the ABC transporter complex GlcSTUV involved in glucose uptake. Responsible for the translocation of the substrate across the membrane. This Saccharolobus solfataricus (strain ATCC 35092 / DSM 1617 / JCM 11322 / P2) (Sulfolobus solfataricus) protein is Glucose import system permease protein GlcU.